The sequence spans 176 residues: Transcription factor E (176 aa).

The 83-residue stretch at 8–90 folds into the HTH TFE/IIEalpha-type domain; it reads EDPVIQKYLH…LWTFQYEKIP (83 aa).

This sequence belongs to the TFE family. In terms of assembly, monomer. Interaction with RNA polymerase subunits RpoF and RpoE is necessary for Tfe stimulatory transcription activity. Able to interact with Tbp and RNA polymerase in the absence of DNA promoter. Interacts both with the preinitiation and elongation complexes.

In terms of biological role, transcription factor that plays a role in the activation of archaeal genes transcribed by RNA polymerase. Facilitates transcription initiation by enhancing TATA-box recognition by TATA-box-binding protein (Tbp), and transcription factor B (Tfb) and RNA polymerase recruitment. Not absolutely required for transcription in vitro, but particularly important in cases where Tbp or Tfb function is not optimal. It dynamically alters the nucleic acid-binding properties of RNA polymerases by stabilizing the initiation complex and destabilizing elongation complexes. Seems to translocate with the RNA polymerase following initiation and acts by binding to the non template strand of the transcription bubble in elongation complexes. In Haloarcula marismortui (strain ATCC 43049 / DSM 3752 / JCM 8966 / VKM B-1809) (Halobacterium marismortui), this protein is Transcription factor E.